A 507-amino-acid polypeptide reads, in one-letter code: 2,3-bisphosphoglycerate-independent phosphoglycerate mutase (507 aa).

Residues aspartate 11 and serine 61 each contribute to the Mn(2+) site. Residue serine 61 is the Phosphoserine intermediate of the active site. Residues histidine 122, 150 to 151 (RD), arginine 182, arginine 188, 257 to 260 (RPDR), and lysine 332 each bind substrate. Residues aspartate 397, histidine 401, aspartate 438, histidine 439, and histidine 456 each coordinate Mn(2+).

The protein belongs to the BPG-independent phosphoglycerate mutase family. Monomer. Mn(2+) is required as a cofactor.

The catalysed reaction is (2R)-2-phosphoglycerate = (2R)-3-phosphoglycerate. The protein operates within carbohydrate degradation; glycolysis; pyruvate from D-glyceraldehyde 3-phosphate: step 3/5. Catalyzes the interconversion of 2-phosphoglycerate and 3-phosphoglycerate. This Mycoplasma genitalium (strain ATCC 33530 / DSM 19775 / NCTC 10195 / G37) (Mycoplasmoides genitalium) protein is 2,3-bisphosphoglycerate-independent phosphoglycerate mutase.